A 324-amino-acid chain; its full sequence is Glyoxylate/hydroxypyruvate reductase B (324 aa).

Active-site residues include Arg237 and Glu266. Residue His285 is the Proton donor of the active site.

Belongs to the D-isomer specific 2-hydroxyacid dehydrogenase family. GhrB subfamily. As to quaternary structure, homodimer.

It is found in the cytoplasm. The catalysed reaction is glycolate + NADP(+) = glyoxylate + NADPH + H(+). It catalyses the reaction (R)-glycerate + NAD(+) = 3-hydroxypyruvate + NADH + H(+). The enzyme catalyses (R)-glycerate + NADP(+) = 3-hydroxypyruvate + NADPH + H(+). Functionally, catalyzes the NADPH-dependent reduction of glyoxylate and hydroxypyruvate into glycolate and glycerate, respectively. The protein is Glyoxylate/hydroxypyruvate reductase B of Salmonella paratyphi B (strain ATCC BAA-1250 / SPB7).